The primary structure comprises 433 residues: Enolase (433 aa).

Q167 contributes to the (2R)-2-phosphoglycerate binding site. E209 (proton donor) is an active-site residue. Mg(2+) contacts are provided by D246, E291, and D318. (2R)-2-phosphoglycerate contacts are provided by K343, R372, S373, and K394. K343 serves as the catalytic Proton acceptor.

This sequence belongs to the enolase family. As to quaternary structure, component of the RNA degradosome, a multiprotein complex involved in RNA processing and mRNA degradation. The cofactor is Mg(2+).

Its subcellular location is the cytoplasm. The protein resides in the secreted. It is found in the cell surface. It catalyses the reaction (2R)-2-phosphoglycerate = phosphoenolpyruvate + H2O. It participates in carbohydrate degradation; glycolysis; pyruvate from D-glyceraldehyde 3-phosphate: step 4/5. In terms of biological role, catalyzes the reversible conversion of 2-phosphoglycerate (2-PG) into phosphoenolpyruvate (PEP). It is essential for the degradation of carbohydrates via glycolysis. This Vibrio vulnificus (strain CMCP6) protein is Enolase.